The following is a 494-amino-acid chain: Cytochrome P450 71D94 (494 aa).

Residues M1 to L21 traverse the membrane as a helical; Signal-anchor for type II membrane protein segment. C434 contributes to the heme binding site.

It belongs to the cytochrome P450 family. Heme serves as cofactor.

The protein resides in the endoplasmic reticulum membrane. Functionally, cytochrome P450 oxygenase of undefined substrate. Not active with limonene, (+)- or (-)-piperitone, (-)-isopiperitone, piperitenone or (+)-pulegone. The sequence is that of Cytochrome P450 71D94 (CYP71D94) from Mentha gracilis (Gingermint).